A 475-amino-acid polypeptide reads, in one-letter code: Rho GTPase-activating protein 15 (475 aa).

A disordered region spans residues 1–22; that stretch reads MERSTTSDTASEKPNPSHSTGA. The 111-residue stretch at 80–190 folds into the PH domain; it reads VVEKEGYLLK…WFHAIKNAID (111 aa). In terms of domain architecture, Rho-GAP spans 281–470; that stretch reads SHLHLVCEHE…LMLSEYSKIF (190 aa).

It is found in the cytoplasm. The protein localises to the membrane. In terms of biological role, GTPase activator for the Rho-type GTPases by converting them to an inactive GDP-bound state. The protein is Rho GTPase-activating protein 15 (ARHGAP15) of Gallus gallus (Chicken).